The primary structure comprises 212 residues: Thymidylate kinase (212 aa).

11–18 (GLEGAGKS) contributes to the ATP binding site.

This sequence belongs to the thymidylate kinase family.

It catalyses the reaction dTMP + ATP = dTDP + ADP. Its function is as follows. Phosphorylation of dTMP to form dTDP in both de novo and salvage pathways of dTTP synthesis. The sequence is that of Thymidylate kinase from Vibrio vulnificus (strain CMCP6).